Here is a 256-residue protein sequence, read N- to C-terminus: Thiazole synthase (256 aa).

K96 (schiff-base intermediate with DXP) is an active-site residue. 1-deoxy-D-xylulose 5-phosphate is bound by residues G157, 183–184, and 205–206; these read AG and NT.

Belongs to the ThiG family. In terms of assembly, homotetramer. Forms heterodimers with either ThiH or ThiS.

Its subcellular location is the cytoplasm. It carries out the reaction [ThiS sulfur-carrier protein]-C-terminal-Gly-aminoethanethioate + 2-iminoacetate + 1-deoxy-D-xylulose 5-phosphate = [ThiS sulfur-carrier protein]-C-terminal Gly-Gly + 2-[(2R,5Z)-2-carboxy-4-methylthiazol-5(2H)-ylidene]ethyl phosphate + 2 H2O + H(+). It functions in the pathway cofactor biosynthesis; thiamine diphosphate biosynthesis. Catalyzes the rearrangement of 1-deoxy-D-xylulose 5-phosphate (DXP) to produce the thiazole phosphate moiety of thiamine. Sulfur is provided by the thiocarboxylate moiety of the carrier protein ThiS. In vitro, sulfur can be provided by H(2)S. This is Thiazole synthase from Bacillus cereus (strain G9842).